We begin with the raw amino-acid sequence, 165 residues long: Ixolaris (165 aa).

A signal peptide spans 1–26 (MRAVSCFLYYGVAWIALGSWGASSSA). BPTI/Kunitz inhibitor domains follow at residues 43–93 (CLDP…NESC) and 101–151 (CSLE…KETC). 5 cysteine pairs are disulfide-bonded: Cys-43–Cys-93, Cys-51–Cys-76, Cys-68–Cys-89, Cys-101–Cys-151, and Cys-126–Cys-147. Residues Asn-90 and Asn-123 are each glycosylated (N-linked (GlcNAc...) asparagine). N-linked (GlcNAc...) asparagine glycosylation occurs at Asn-161.

As to quaternary structure, monomer. Interacts with host coagulation factor X/F10 (inactive and activated). Saliva (at protein level). Salivary gland.

The protein localises to the secreted. In terms of biological role, anticoagulant protein that modulates blood feeding of ticks on vertebrate species. Inhibits activation of host blood coagulation factor X (F10). Inhibits activity of host coagulation factor VIIa-tissue factor (F7-F3) complex in a factor X/Xa-dependent manner. Prevents interaction between host coagulation factor X and activated factor VIIIa (F8). This chain is Ixolaris, found in Ixodes scapularis (Black-legged tick).